Reading from the N-terminus, the 293-residue chain is sn-glycerol-3-phosphate transport system permease protein UgpA (293 aa).

6 helical membrane passes run 10 to 30 (ILPYFLLAPQIVLTVVFFFWP), 72 to 92 (VTVVFNVLTALLAMGVALLLA), 108 to 128 (LLIWPYAVAPAVAGMLWLFMF), 155 to 177 (AMGLVVVAAAWKQISYNFLFFVA), 204 to 224 (IVFPLLAPTSFFLLVVNTVYA), and 261 to 281 (LGSSSAQSVILMAIVIALTAF). Residues 66 to 282 (YLHSVQVTVV…AIVIALTAFQ (217 aa)) enclose the ABC transmembrane type-1 domain.

The protein belongs to the binding-protein-dependent transport system permease family. The complex is composed of two ATP-binding proteins (UgpC), two transmembrane proteins (UgpA and UgpE) and a solute-binding protein (UgpB).

The protein localises to the cell inner membrane. Functionally, part of the ABC transporter complex UgpBAEC involved in sn-glycerol-3-phosphate (G3P) import. Probably responsible for the translocation of the substrate across the membrane. The chain is sn-glycerol-3-phosphate transport system permease protein UgpA (ugpA) from Brucella suis biovar 1 (strain 1330).